The sequence spans 247 residues: DNA polymerase sliding clamp (247 aa).

The protein belongs to the PCNA family. Homotrimer. The subunits circularize to form a toroid; DNA passes through its center. Replication factor C (RFC) is required to load the toroid on the DNA.

Its function is as follows. Sliding clamp subunit that acts as a moving platform for DNA processing. Responsible for tethering the catalytic subunit of DNA polymerase and other proteins to DNA during high-speed replication. This chain is DNA polymerase sliding clamp, found in Methanospirillum hungatei JF-1 (strain ATCC 27890 / DSM 864 / NBRC 100397 / JF-1).